The sequence spans 86 residues: Small ribosomal subunit protein bS20 (86 aa).

The disordered stretch occupies residues 1–22 (MANIKSQIKRIRTNERRRLRNQ). Residues 7-20 (QIKRIRTNERRRLR) are compositionally biased toward basic residues.

The protein belongs to the bacterial ribosomal protein bS20 family.

Binds directly to 16S ribosomal RNA. In Mycolicibacterium smegmatis (strain ATCC 700084 / mc(2)155) (Mycobacterium smegmatis), this protein is Small ribosomal subunit protein bS20.